Consider the following 227-residue polypeptide: Nudix hydrolase 27, chloroplastic (227 aa).

Residues 1-44 constitute a chloroplast transit peptide; that stretch reads MAVKASGFIGKSAISVHLDFSSFPVKFSCLKQFSVSSPKPLVVL. The region spanning 61–208 is the Nudix hydrolase domain; the sequence is GYRKNVGICL…KRPVYEHVIK (148 aa). Positions 94-115 match the Nudix box motif; sequence GGADEGEDLRNAAFRELREETG. Positions 109 and 113 each coordinate Mn(2+).

The protein belongs to the Nudix hydrolase family. Requires Mg(2+) as cofactor. It depends on Mn(2+) as a cofactor. As to expression, expressed in roots, leaves, stems and inflorescences.

Its subcellular location is the plastid. It localises to the chloroplast. Its function is as follows. Mediates the hydrolysis of some nucleoside diphosphate derivatives. Can use diadenosine 5',5'''-P(1)P(5) pentaphosphate (Ap(5)A) as substrates. This Arabidopsis thaliana (Mouse-ear cress) protein is Nudix hydrolase 27, chloroplastic (NUDT27).